The sequence spans 251 residues: Small ribosomal subunit protein uS2B (251 aa).

An N-acetylserine modification is found at Ser2. The segment covering 214–225 (AVEEASATGATE) has biased composition (low complexity). Residues 214-251 (AVEEASATGATEEATEEATEETTEATEWAEDNTENATW) form a disordered region. The span at 226 to 251 (EATEEATEETTEATEWAEDNTENATW) shows a compositional bias: acidic residues.

Belongs to the universal ribosomal protein uS2 family. Component of the small ribosomal subunit. Mature ribosomes consist of a small (40S) and a large (60S) subunit. The 40S subunit contains about 33 different proteins and 1 molecule of RNA (18S). The 60S subunit contains about 49 different proteins and 3 molecules of RNA (25S, 5.8S and 5S). Interacts with RPS21.

The protein localises to the cytoplasm. Required for the assembly and/or stability of the 40S ribosomal subunit. Required for the processing of the 20S rRNA-precursor to mature 18S rRNA in a late step of the maturation of 40S ribosomal subunits. The protein is Small ribosomal subunit protein uS2B of Vanderwaltozyma polyspora (strain ATCC 22028 / DSM 70294 / BCRC 21397 / CBS 2163 / NBRC 10782 / NRRL Y-8283 / UCD 57-17) (Kluyveromyces polysporus).